A 249-amino-acid chain; its full sequence is 2,3-bisphosphoglycerate-dependent phosphoglycerate mutase (249 aa).

Substrate is bound by residues 8-15, 21-22, Arg-60, 87-90, Lys-98, 114-115, and 183-184; these read RHGESTWN, TG, ERHY, RR, and GN. The active-site Tele-phosphohistidine intermediate is the His-9. Catalysis depends on Glu-87, which acts as the Proton donor/acceptor.

This sequence belongs to the phosphoglycerate mutase family. BPG-dependent PGAM subfamily. Homodimer.

The enzyme catalyses (2R)-2-phosphoglycerate = (2R)-3-phosphoglycerate. The protein operates within carbohydrate degradation; glycolysis; pyruvate from D-glyceraldehyde 3-phosphate: step 3/5. Its function is as follows. Catalyzes the interconversion of 2-phosphoglycerate and 3-phosphoglycerate. The polypeptide is 2,3-bisphosphoglycerate-dependent phosphoglycerate mutase (Azoarcus sp. (strain BH72)).